A 284-amino-acid chain; its full sequence is Avenin-like b3 (284 aa).

The signal sequence occupies residues 1 to 18; that stretch reads MKVFILALLALTATTAIA.

Belongs to the prolamin family. Post-translationally, contains disulfide bonds.

Seed storage protein. Might be integrated via inter-chain disulfide bonds within the glutenin polymer. This is Avenin-like b3 from Triticum aestivum (Wheat).